We begin with the raw amino-acid sequence, 90 residues long: Co-chaperonin GroES (90 aa).

Belongs to the GroES chaperonin family. As to quaternary structure, heptamer of 7 subunits arranged in a ring. Interacts with the chaperonin GroEL.

The protein resides in the cytoplasm. Its function is as follows. Together with the chaperonin GroEL, plays an essential role in assisting protein folding. The GroEL-GroES system forms a nano-cage that allows encapsulation of the non-native substrate proteins and provides a physical environment optimized to promote and accelerate protein folding. GroES binds to the apical surface of the GroEL ring, thereby capping the opening of the GroEL channel. In Borreliella burgdorferi (strain ATCC 35210 / DSM 4680 / CIP 102532 / B31) (Borrelia burgdorferi), this protein is Co-chaperonin GroES.